A 123-amino-acid polypeptide reads, in one-letter code: Small ribosomal subunit protein uS12 (123 aa).

The disordered stretch occupies residues 1 to 25; it reads MPTINQLVRKPRKSRSALNKAPALQ. The residue at position 90 (Asp-90) is a 3-methylthioaspartic acid.

Belongs to the universal ribosomal protein uS12 family. Part of the 30S ribosomal subunit. Contacts proteins S8 and S17. May interact with IF1 in the 30S initiation complex.

Functionally, with S4 and S5 plays an important role in translational accuracy. In terms of biological role, interacts with and stabilizes bases of the 16S rRNA that are involved in tRNA selection in the A site and with the mRNA backbone. Located at the interface of the 30S and 50S subunits, it traverses the body of the 30S subunit contacting proteins on the other side and probably holding the rRNA structure together. The combined cluster of proteins S8, S12 and S17 appears to hold together the shoulder and platform of the 30S subunit. This is Small ribosomal subunit protein uS12 from Ehrlichia canis (strain Jake).